The following is a 103-amino-acid chain: Flagellar hook-basal body complex protein FliE (103 aa).

The protein belongs to the FliE family.

It localises to the bacterial flagellum basal body. This chain is Flagellar hook-basal body complex protein FliE, found in Yersinia enterocolitica serotype O:8 / biotype 1B (strain NCTC 13174 / 8081).